A 138-amino-acid chain; its full sequence is Large ribosomal subunit protein uL16 (138 aa).

Residues 1–16 show a composition bias toward basic residues; that stretch reads MLIPKRVKYRRQHRPT. The tract at residues 1–23 is disordered; that stretch reads MLIPKRVKYRRQHRPTRSGISKG.

The protein belongs to the universal ribosomal protein uL16 family. As to quaternary structure, part of the 50S ribosomal subunit.

Functionally, binds 23S rRNA and is also seen to make contacts with the A and possibly P site tRNAs. The sequence is that of Large ribosomal subunit protein uL16 from Corynebacterium glutamicum (strain R).